The following is a 967-amino-acid chain: Aminopeptidase N (967 aa).

Residues 2–8 (AKGFYIS) are Cytoplasmic-facing. Residues 9–32 (KSLGILGILLGVAAVCTIIALSVV) traverse the membrane as a helical; Signal-anchor for type II membrane protein segment. The cytosolic Ser/Thr-rich junction stretch occupies residues 33-68 (YSQEKNKNANSSPVASTTPSASATTNPASATTLDQS). The Extracellular portion of the chain corresponds to 33 to 967 (YSQEKNKNAN…VLQWFTENSK (935 aa)). The tract at residues 40–62 (NANSSPVASTTPSASATTNPASA) is disordered. Residues 41–62 (ANSSPVASTTPSASATTNPASA) are compositionally biased toward low complexity. The interval 69-967 (KAWNRYRLPN…VLQWFTENSK (899 aa)) is metalloprotease. The N-linked (GlcNAc...) asparagine glycan is linked to Asn-128. At Tyr-176 the chain carries Sulfotyrosine. 2 N-linked (GlcNAc...) asparagine glycosylation sites follow: Asn-234 and Asn-265. Positions 288–295 (DYVEKQAS) are necessary and sufficient to mediate interaction with HCoV-229E. Asn-319 is a glycosylation site (N-linked (GlcNAc...) asparagine). 352–356 (GAMEN) provides a ligand contact to substrate. His-388 is a Zn(2+) binding site. The active-site Proton acceptor is Glu-389. Zn(2+) contacts are provided by His-392 and Glu-411. 2 positions are modified to sulfotyrosine: Tyr-419 and Tyr-424. N-linked (GlcNAc...) asparagine glycans are attached at residues Asn-527, Asn-573, Asn-625, Asn-681, and Asn-735. Disulfide bonds link Cys-761–Cys-768 and Cys-798–Cys-834. Asn-818 carries an N-linked (GlcNAc...) asparagine glycan. Tyr-913 carries the post-translational modification Sulfotyrosine.

Belongs to the peptidase M1 family. Homodimer. Interacts with SLC6A19. As to quaternary structure, (Microbial infection) Interacts with the S1 domain of human coronavirus 229E/HCoV-229E spike protein. Zn(2+) is required as a cofactor. Post-translationally, sulfated. N- and O-glycosylated. In terms of processing, may undergo proteolysis and give rise to a soluble form. Expressed in epithelial cells of the kidney, intestine, and respiratory tract; granulocytes, monocytes, fibroblasts, endothelial cells, cerebral pericytes at the blood-brain barrier, synaptic membranes of cells in the CNS. Also expressed in endometrial stromal cells, but not in the endometrial glandular cells. Found in the vasculature of tissues that undergo angiogenesis and in malignant gliomas and lymph node metastases from multiple tumor types but not in blood vessels of normal tissues. A soluble form has been found in plasma. It is found to be elevated in plasma and effusions of cancer patients.

The protein resides in the cell membrane. It catalyses the reaction Release of an N-terminal amino acid, Xaa-|-Yaa- from a peptide, amide or arylamide. Xaa is preferably Ala, but may be most amino acids including Pro (slow action). When a terminal hydrophobic residue is followed by a prolyl residue, the two may be released as an intact Xaa-Pro dipeptide.. Its function is as follows. Broad specificity aminopeptidase which plays a role in the final digestion of peptides generated from hydrolysis of proteins by gastric and pancreatic proteases. Also involved in the processing of various peptides including peptide hormones, such as angiotensin III and IV, neuropeptides, and chemokines. May also be involved the cleavage of peptides bound to major histocompatibility complex class II molecules of antigen presenting cells. May have a role in angiogenesis and promote cholesterol crystallization. May have a role in amino acid transport by acting as binding partner of amino acid transporter SLC6A19 and regulating its activity. (Microbial infection) Acts as a receptor for human coronavirus 229E/HCoV-229E. In case of human coronavirus 229E (HCoV-229E) infection, serves as receptor for HCoV-229E spike glycoprotein. In terms of biological role, (Microbial infection) Mediates as well Human cytomegalovirus (HCMV) infection. The sequence is that of Aminopeptidase N (ANPEP) from Homo sapiens (Human).